Here is a 756-residue protein sequence, read N- to C-terminus: Serine/threonine-protein kinase tousled-like 1-B (756 aa).

Composition is skewed to low complexity over residues M1–S12 and S23–P34. Disordered regions lie at residues M1 to R56 and V69 to S185. Basic and acidic residues predominate over residues E45 to R56. Residues N72 to K85 show a composition bias toward gly residues. Over residues S93–S103 the composition is skewed to low complexity. Over residues S104–R120 the composition is skewed to basic and acidic residues. The stretch at D243–M268 forms a coiled coil. The disordered stretch occupies residues K339–P375. Over residues S347–P357 the composition is skewed to low complexity. Residues F397–E435 adopt a coiled-coil conformation. Residues Y450–L728 form the Protein kinase domain. Residues L456–V464 and K479 each bind ATP. D580 acts as the Proton acceptor in catalysis. The interval R734 to Y756 is disordered. Residues S735 to P745 show a composition bias toward polar residues.

Belongs to the protein kinase superfamily. Ser/Thr protein kinase family. Requires Mg(2+) as cofactor.

It is found in the nucleus. The catalysed reaction is L-seryl-[protein] + ATP = O-phospho-L-seryl-[protein] + ADP + H(+). It catalyses the reaction L-threonyl-[protein] + ATP = O-phospho-L-threonyl-[protein] + ADP + H(+). The polypeptide is Serine/threonine-protein kinase tousled-like 1-B (tlk1b) (Danio rerio (Zebrafish)).